The sequence spans 406 residues: Type II secretion system protein F (406 aa).

Residues 1–171 (MAAFEYKALD…KMRSKLQQAM (171 aa)) lie on the Cytoplasmic side of the membrane. Residues Glu-97, Glu-151, and Asp-155 each contribute to the Ca(2+) site. The helical transmembrane segment at 172–192 (IYPVVLVVFAVGIVAFLLAAV) threads the bilayer. The Periplasmic portion of the chain corresponds to 193 to 223 (VPKIVGQFVQMGQALPASTQFLLDASDFLQH). The chain crosses the membrane as a helical span at residues 224–244 (WGISLLVGLLMLIYLVRWLLT). The Cytoplasmic segment spans residues 245–368 (KPDIRLRWDR…QDNSFESTVN (124 aa)). The helical transmembrane segment at 369 to 389 (IALGIFTPALIALMAGMVLFI) threads the bilayer. At 390 to 406 (VMATLMPILEMNNLMSR) the chain is on the periplasmic side.

Belongs to the GSP F family. In terms of assembly, type II secretion system is composed of four main components: the outer membrane complex, the inner membrane complex, the cytoplasmic secretion ATPase and the periplasm-spanning pseudopilus. Homodimer. Interacts with EpsE/GspE and EpsL/GspL components.

It localises to the cell inner membrane. Its function is as follows. Component of the type II secretion system inner membrane complex required for the energy-dependent secretion of extracellular factors such as proteases and toxins from the periplasm. The sequence is that of Type II secretion system protein F (epsF) from Vibrio cholerae serotype O1 (strain ATCC 39315 / El Tor Inaba N16961).